We begin with the raw amino-acid sequence, 2622 residues long: Ankyrin-3 (2622 aa).

The tract at residues methionine 1–serine 44 is disordered. Positions lysine 25–lysine 38 are enriched in basic residues. Serine 39 carries the phosphoserine modification. ANK repeat units follow at residues asparagine 73–alanine 102, lysine 106–alanine 135, asparagine 139–leucine 168, aspartate 172–valine 201, leucine 203–isoleucine 230, serine 242–phenylalanine 271, asparagine 275–alanine 304, aspartate 308–serine 337, asparagine 341–aspartate 370, aspartate 374–alanine 403, asparagine 407–alanine 436, serine 440–threonine 469, arginine 473–alanine 502, aspartate 506–alanine 535, serine 539–isoleucine 568, lysine 572–alanine 601, serine 605–alanine 634, asparagine 638–alanine 667, glutamine 671–leucine 700, serine 704–alanine 733, methionine 737–alanine 766, asparagine 770–glutamate 799, and asparagine 803–threonine 832. The residue at position 631 (serine 631) is a Phosphoserine. 10 positions are modified to phosphoserine: valine 851, serine 855, serine 869, serine 875, serine 921, serine 924, serine 930, serine 965, serine 967, and serine 1121. The interval leucine 868 to aspartate 889 is disordered. The span at tyrosine 873 to isoleucine 884 shows a compositional bias: acidic residues. ZU5 domains lie at phenylalanine 992–arginine 1147 and lysine 1149–cysteine 1296. Phosphoserine is present on residues serine 1458 and serine 1469. The segment at threonine 1510 to isoleucine 1539 is disordered. A compositionally biased stretch (low complexity) spans proline 1515 to leucine 1536. A phosphoserine mark is found at serine 1621, serine 1624, serine 1679, serine 1984, serine 2102, serine 2114, and serine 2117. Disordered stretches follow at residues valine 1968–phenylalanine 1992, isoleucine 2099–valine 2147, and serine 2292–glutamine 2312. The span at proline 1977–glutamate 1986 shows a compositional bias: basic and acidic residues. Over residues phenylalanine 2106–lysine 2127 the composition is skewed to basic and acidic residues. Over residues threonine 2128–serine 2137 the composition is skewed to polar residues. The Death domain occupies threonine 2336–isoleucine 2420. 3 positions are modified to phosphoserine: serine 2457, serine 2475, and serine 2544. The interval cysteine 2568–histidine 2622 is disordered. Over residues glycine 2594–histidine 2622 the composition is skewed to basic and acidic residues.

As to quaternary structure, may be a constituent of a NFASC/NRCAM/ankyrin G complex. Interacts with RHBG. Directly interacts with DMD and betaDAG1; this interaction does not interfere with DMD-binding and is required for DMD and betaDAG1 retention at costameres. Interacts (via N-terminal ANK repeats) with SCHIP1 isoform 7 (via C-terminus); this interaction is required for the localization at axon initial segments (AISs) and nodes of Ranvier (NRs). Interacts with PLEC and FLNC. Interacts (via ANK repeats) with IQCJ-SCHIP1; required for IQCJ-SCHIP1 localization at axon initial segments (AIS) and nodes of Ranvier. Interacts with SCHIP1. Interacts with KCNA1; this inhibits channel activity. Interacts with SCN5A. Interacts with PKP2 and GJA1/CX43. Interacts (via its C-terminal muscle-specific Obscurin/Titin-Binding-related domain sequence) with PLEC and FLNC. Expressed in the heart (at protein level). Expressed in skeletal muscle (at protein level). Expressed at highest levels in brain and testis, followed by skin, kidney, liver and spleen. In terms of tissue distribution, may be specifically expressed in muscle tissues, including heart and skeletal muscle (extensor digitorum longus) (at protein level). As to expression, expressed in skeletal muscle, brain, lung, heart, testes and kidney.

It localises to the cytoplasm. Its subcellular location is the cytoskeleton. It is found in the cell projection. The protein localises to the axon. The protein resides in the cell membrane. It localises to the sarcolemma. Its subcellular location is the postsynaptic cell membrane. It is found in the lysosome. The protein localises to the T-tubule. Membrane-cytoskeleton linker. May participate in the maintenance/targeting of ion channels and cell adhesion molecules at the nodes of Ranvier and axonal initial segments. In skeletal muscle, required for costamere localization of DMD and betaDAG1. Regulates KCNA1 channel activity in function of dietary Mg(2+) levels, and thereby contributes to the regulation of renal Mg(2+) reabsorption. Required for intracellular adhesion and junctional conductance in myocytes, potentially via stabilization of GJA1/CX43 protein abundance and promotion of PKP2, GJA1/CX43, and SCN5A/Nav1.5 localization to cell-cell junctions. The chain is Ankyrin-3 (Ank3) from Rattus norvegicus (Rat).